The chain runs to 393 residues: S-adenosylmethionine synthase 1 (393 aa).

E9 is a binding site for Mg(2+). H15 is an ATP binding site. E43 is a binding site for K(+). E56 and Q99 together coordinate L-methionine. ATP contacts are provided by residues 167 to 169, 235 to 238, D246, 252 to 253, A269, K273, and K277; these read DGK, SGRF, and RK. An L-methionine-binding site is contributed by D246. K277 serves as a coordination point for L-methionine.

This sequence belongs to the AdoMet synthase family. In terms of assembly, homotetramer. Requires Mn(2+) as cofactor. Mg(2+) is required as a cofactor. Co(2+) serves as cofactor. The cofactor is K(+).

It localises to the cytoplasm. It carries out the reaction L-methionine + ATP + H2O = S-adenosyl-L-methionine + phosphate + diphosphate. Its pathway is amino-acid biosynthesis; S-adenosyl-L-methionine biosynthesis; S-adenosyl-L-methionine from L-methionine: step 1/1. Catalyzes the formation of S-adenosylmethionine from methionine and ATP. The reaction comprises two steps that are both catalyzed by the same enzyme: formation of S-adenosylmethionine (AdoMet) and triphosphate, and subsequent hydrolysis of the triphosphate. In Solanum tuberosum (Potato), this protein is S-adenosylmethionine synthase 1 (METK1).